Reading from the N-terminus, the 299-residue chain is MAQNLKDLAGRLPSGPRGMGTALKLLLGAGAVAYGVRESVFTVEGGHRAIFFNRIGGVQQDTILAEGLHFRIPWFQYPIIYDIRARPRKISSPTGSKDLQMVNISLRVLSRPNAQELPSMYQRLGLDYEERVLPSIVNEVLKSVVAKFNASQLITQRAQVSLLIRRELTERAKDFSLILDDVAITELSFSREYTAAVEAKQVAQQEAQRAQFLVEKAKQEQRQKIVQAEGEAEAAKMLGEALSKNPGYIKLRKIRAAQNISKTIATSQNRIYLTADNLVLNLQDESFTRGSDSLIKGKK.

Position 2 is an N-acetylalanine (Ala-2). Residues 19–49 (MGTALKLLLGAGAVAYGVRESVFTVEGGHRA) form a necessary for transcriptional repression region. Tyr-128 is subject to Phosphotyrosine. Lys-147 is subject to N6-acetyllysine. The interval 150 to 174 (ASQLITQRAQVSLLIRRELTERAKD) is necessary for transcriptional repression. Ser-151 is subject to Phosphoserine. The stretch at 190 to 238 (SREYTAAVEAKQVAQQEAQRAQFLVEKAKQEQRQKIVQAEGEAEAAKML) forms a coiled coil. Lys-200, Lys-236, Lys-250, and Lys-262 each carry N6-acetyllysine.

The protein belongs to the prohibitin family. As to quaternary structure, the mitochondrial prohibitin complex consists of two subunits (PHB1 and PHB2), assembled into a membrane-associated ring-shaped supercomplex of approximately 1 mDa. Interacts with ESR1, HDAC1 and HDAC5. Interacts with ZNF703. Interacts with STOML2. Interacts with ARFGEF3. Interacts with SPHK2. Interacts with COX4I1; the interaction associates PHB2 with COX. Interacts with MAP1LC3B (membrane-bound form LC3-II); the interaction is direct and upon mitochondrial depolarization and proteasome-dependent outer membrane rupture. Interacts with IGFBP6 (via C-terminal domain). Interacts with CLPB. Interacts with CD86 (via cytoplasmic domain); the interactions increases after priming with CD40. Interacts with AFG3L2. Interacts with DNAJC19. Interacts with AKT2; this interaction may be important for myogenic differentiation. Phosphorylated. Tyrosine phosphorylation is indirectly stimulated by IGFBP6.

It localises to the mitochondrion inner membrane. The protein resides in the cytoplasm. The protein localises to the nucleus. It is found in the cell membrane. In terms of biological role, protein with pleiotropic attributes mediated in a cell-compartment- and tissue-specific manner, which include the plasma membrane-associated cell signaling functions, mitochondrial chaperone, and transcriptional co-regulator of transcription factors and sex steroid hormones in the nucleus. In the mitochondria, together with PHB, forms large ring complexes (prohibitin complexes) in the inner mitochondrial membrane (IMM) and functions as a chaperone protein that stabilizes mitochondrial respiratory enzymes and maintains mitochondrial integrity in the IMM, which is required for mitochondrial morphogenesis, neuronal survival, and normal lifespan. The prohibitin complex, with DNAJC19, regulates cardiolipin remodeling and the protein turnover of OMA1 in a cardiolipin-binding manner. Also regulates cytochrome-c oxidase assembly (COX) and mitochondrial respiration. Binding to sphingoid 1-phosphate (SPP) modulates its regulator activity. Has a key role of mitophagy receptor involved in targeting mitochondria for autophagic degradation. Involved in mitochondrial-mediated antiviral innate immunity, activates RIG-I-mediated signal transduction and production of IFNB1 and pro-inflammatory cytokine IL6. Functionally, in the nucleus, serves as transcriptional co-regulator. Acts as a mediator of transcriptional repression by nuclear hormone receptors via recruitment of histone deacetylases. Functions as an estrogen receptor (ER)-selective coregulator that potentiates the inhibitory activities of antiestrogens and represses the activity of estrogens. Competes with NCOA1 for modulation of ER transcriptional activity. Its function is as follows. In the plasma membrane, is involved in IGFBP6-induced cell migration. Cooperates with CD86 to mediate CD86-signaling in B lymphocytes that regulates the level of IgG1 produced through the activation of distal signaling intermediates. Upon CD40 engagement, required to activate NF-kappa-B signaling pathway via phospholipase C and protein kinase C activation. This Rattus norvegicus (Rat) protein is Prohibitin-2.